Consider the following 292-residue polypeptide: Cyclin-dependent kinase 5 homolog (292 aa).

The region spanning 4–285 (YSKIEKLGEG…AAAALKHPYF (282 aa)) is the Protein kinase domain. ATP is bound by residues 10–18 (LGEGTYGIV) and Lys-33. A Phosphothreonine modification is found at Thr-14. At Tyr-15 the chain carries Phosphotyrosine. Asp-126 serves as the catalytic Proton acceptor.

It belongs to the protein kinase superfamily. CMGC Ser/Thr protein kinase family. CDC2/CDKX subfamily.

It carries out the reaction L-seryl-[protein] + ATP = O-phospho-L-seryl-[protein] + ADP + H(+). The catalysed reaction is L-threonyl-[protein] + ATP = O-phospho-L-threonyl-[protein] + ADP + H(+). Its activity is regulated as follows. Phosphorylation at Thr-14 or Tyr-15 inactivates the enzyme. The sequence is that of Cyclin-dependent kinase 5 homolog (cdk5) from Dictyostelium discoideum (Social amoeba).